Consider the following 245-residue polypeptide: 1-(5-phosphoribosyl)-5-[(5-phosphoribosylamino)methylideneamino] imidazole-4-carboxamide isomerase (245 aa).

The active-site Proton acceptor is Asp-8. The active-site Proton donor is Asp-130.

This sequence belongs to the HisA/HisF family.

Its subcellular location is the cytoplasm. It catalyses the reaction 1-(5-phospho-beta-D-ribosyl)-5-[(5-phospho-beta-D-ribosylamino)methylideneamino]imidazole-4-carboxamide = 5-[(5-phospho-1-deoxy-D-ribulos-1-ylimino)methylamino]-1-(5-phospho-beta-D-ribosyl)imidazole-4-carboxamide. Its pathway is amino-acid biosynthesis; L-histidine biosynthesis; L-histidine from 5-phospho-alpha-D-ribose 1-diphosphate: step 4/9. The chain is 1-(5-phosphoribosyl)-5-[(5-phosphoribosylamino)methylideneamino] imidazole-4-carboxamide isomerase from Pseudomonas fluorescens (strain ATCC BAA-477 / NRRL B-23932 / Pf-5).